A 270-amino-acid chain; its full sequence is 4-hydroxy-tetrahydrodipicolinate reductase (270 aa).

Residues 8 to 13 (GALGRM), Asp34, 102 to 104 (GTT), and 128 to 131 (SQNY) contribute to the NAD(+) site. The active-site Proton donor/acceptor is the His160. His161 contributes to the (S)-2,3,4,5-tetrahydrodipicolinate binding site. Lys164 (proton donor) is an active-site residue. 170–171 (GT) serves as a coordination point for (S)-2,3,4,5-tetrahydrodipicolinate.

Belongs to the DapB family.

It is found in the cytoplasm. The enzyme catalyses (S)-2,3,4,5-tetrahydrodipicolinate + NAD(+) + H2O = (2S,4S)-4-hydroxy-2,3,4,5-tetrahydrodipicolinate + NADH + H(+). It carries out the reaction (S)-2,3,4,5-tetrahydrodipicolinate + NADP(+) + H2O = (2S,4S)-4-hydroxy-2,3,4,5-tetrahydrodipicolinate + NADPH + H(+). The protein operates within amino-acid biosynthesis; L-lysine biosynthesis via DAP pathway; (S)-tetrahydrodipicolinate from L-aspartate: step 4/4. Functionally, catalyzes the conversion of 4-hydroxy-tetrahydrodipicolinate (HTPA) to tetrahydrodipicolinate. The chain is 4-hydroxy-tetrahydrodipicolinate reductase from Methanococcus maripaludis (strain DSM 14266 / JCM 13030 / NBRC 101832 / S2 / LL).